Here is a 201-residue protein sequence, read N- to C-terminus: MDKFTKLTGVAAPLPIVNIDTDMIIPKDYLKTIKRTGLGKGLFAEMRFNEDGSENPDFVLNKPGYRKAQILVAGDNFGCGSSREHAPWALLDYGIRCVISTSFADIFYNNCFKNGILPIKVAQEDLDKLMDDASRGANATLTIDLETKQIHGPDGGTISFDLDDFKRHCLLNGLDDIGLTMEKAKSIDTFEAKNAEERPWA.

This sequence belongs to the LeuD family. LeuD type 1 subfamily. Heterodimer of LeuC and LeuD.

It catalyses the reaction (2R,3S)-3-isopropylmalate = (2S)-2-isopropylmalate. The protein operates within amino-acid biosynthesis; L-leucine biosynthesis; L-leucine from 3-methyl-2-oxobutanoate: step 2/4. Its function is as follows. Catalyzes the isomerization between 2-isopropylmalate and 3-isopropylmalate, via the formation of 2-isopropylmaleate. The chain is 3-isopropylmalate dehydratase small subunit from Brucella abortus (strain S19).